Consider the following 280-residue polypeptide: CAG pathogenicity island protein 12 (280 aa).

A signal peptide spans 1–20; the sequence is MKLRASVLIGATILCLILSA. Residue Cys-21 is the site of N-palmitoyl cysteine attachment. A lipid anchor (S-diacylglycerol cysteine) is attached at Cys-21.

The protein resides in the cell membrane. The protein is CAG pathogenicity island protein 12 (cagT) of Helicobacter pylori (strain ATCC 700392 / 26695) (Campylobacter pylori).